A 535-amino-acid polypeptide reads, in one-letter code: MSLRPNAKTEVRRNRYKVAVDAEEGRRRREDNMVEIRKSKREESLQKKRREGLQANQLPQFAPSPVPASSTVEKKLESLPAMVGGVWSDDRSLQLEATTQFRKLLSIERSPPIEEVIDAGVVPRFVEFLTREDYPQLQFEAAWALTNIASGTSENTKVVIEHGAVPIFVQLLASQSDDVREQAVWALGNVAGDSPRCRDLVLGQGALIPLLSQLNEHAKLSMLRNATWTLSNFCRGKPQPPFDQVRPALPALERLIHSTDEEVLTDACWALSYLSDGTNDKIQSVIEAGVVPRLVELLQHQSPSVLIPALRSIGNIVTGDDLQTQCVISHGALLSLLSLLTHNHKKSIKKEACWTISNITAGNRDQIQAVCEAGLICPLVNLLQNAEFDIKKEAAWAISNATSGGSPDQIKYMVEQGVVKPLCDLLVCPDPRIITVCLEGLENILKVGEAEKVTGNTGDVNFYAQLIDDAEGLEKIENLQSHDNSEIYEKAVKILETYWLEEEDETLPPGDPSAQGFQFGGGNDAAVPPGGFNFQ.

In terms of domain architecture, IBB spans 1-58; the sequence is MSLRPNAKTEVRRNRYKVAVDAEEGRRRREDNMVEIRKSKREESLQKKRREGLQANQL. The span at 20 to 46 shows a compositional bias: basic and acidic residues; the sequence is VDAEEGRRRREDNMVEIRKSKREESLQ. The disordered stretch occupies residues 20-67; that stretch reads VDAEEGRRRREDNMVEIRKSKREESLQKKRREGLQANQLPQFAPSPVP. ARM repeat units lie at residues 67 to 106, 110 to 150, 153 to 192, 195 to 235, 237 to 276, 279 to 318, 321 to 361, 364 to 403, 407 to 446, and 461 to 500; these read PASS…KLLS, SPPI…NIAS, SENT…NVAG, PRCR…NFCR, KPQP…YLSD, NDKI…NIVT, DLQT…NITA, RDQI…NATS, PDQI…NILK, and NFYA…TYWL.

This sequence belongs to the importin alpha family. Forms a complex with the importin subunit beta-1 KPNB1. Interacts with A.tumefaciens VirD2 and VirE2. Binds to SWO1.

It is found in the nucleus envelope. In terms of biological role, binds to conventional NLS motifs and mediates nuclear protein import across the nuclear envelope. Involved in the maintenance of cell wall integrity under salt stress via interaction with SWO1. Acts as a cellular receptor for the nuclear import of the virD2 protein of Agrobacterium, but is not essential for Agrobacterium-mediated root transformation. The sequence is that of Importin subunit alpha-2 from Arabidopsis thaliana (Mouse-ear cress).